Consider the following 427-residue polypeptide: MKFQTIKGTKDILPSEIHKWHYVENTVRGVFQRFGYNEIRTPVFEQTALFQRGIGETTDIVGKEMYSFQPDPESESLTLRPEMTAPVMRAYLQHSLSGTSPATKVFYISEIFRKERPQAGRQRQFWQFGCECIGSDQPEADAEVILLMTEIYRQLGIKNFTLRLNSLGETESRLAHREALQTYLKPHFDLLDEISKTRFEKNPLRILDSKNPALAEIIAGAPHITEFLDDASKAHFQTVQTYLKNAGLDFTVDPTLVRGLDYYSRTAFELVSTDLGAQDALAGGGRYDSLATVLGAKNSSAAVGFAAGIERLLIIMEKLDLFQAVLPPAPLLFIATQSPVAKEWAFQTVNRLRTEGIHVALDLLGRSLKAQMREANRTHAKYVLIVGEEELSTGRFQLKHLQTSEQVELSEADIFTKMQTETTQDLG.

This sequence belongs to the class-II aminoacyl-tRNA synthetase family. As to quaternary structure, homodimer.

The protein localises to the cytoplasm. It catalyses the reaction tRNA(His) + L-histidine + ATP = L-histidyl-tRNA(His) + AMP + diphosphate + H(+). This chain is Histidine--tRNA ligase, found in Chloroherpeton thalassium (strain ATCC 35110 / GB-78).